Reading from the N-terminus, the 513-residue chain is Interferon alpha/beta receptor 2 (513 aa).

The signal sequence occupies residues 1-21; sequence MRSRCTVSAVGLLSLCLVVSA. Residues 22–242 are Extracellular-facing; it reads SLETITPSAF…GQESGLSESA (221 aa). Disulfide bonds link Cys39/Cys123 and Cys85/Cys93. Asn42, Asn58, Asn65, Asn78, and Asn84 each carry an N-linked (GlcNAc...) asparagine glycan. N-linked (GlcNAc...) asparagine glycosylation is found at Asn149, Asn191, and Asn195. Cys210 and Cys227 are oxidised to a cystine. Residues 243–263 traverse the membrane as a helical segment; it reads IVGITTSCLVVMVFVSTIVML. Over 264–513 the chain is Cytoplasmic; it reads KRIGYICLKD…ADVGDGYIMR (250 aa). Residues 334 to 402 form a disordered region; it reads GYTMHGLTGK…DPTGPYERRK (69 aa). Tyr335 carries the phosphotyrosine modification. Positions 344-354 are enriched in polar residues; the sequence is PLQQTSDTSAS. The span at 377 to 389 shows a compositional bias: low complexity; the sequence is GAEPELPTEAGAG. The residue at position 403 (Ser403) is a Phosphoserine. The segment at 421–444 is mediates interaction with STAT2 (and required for the recruitment of USP18); that stretch reads GDNIIFNVNLNSVFLRVLHDEDAS. Phosphoserine is present on residues Ser448 and Ser465. The tract at residues 458–513 is disordered; that stretch reads EGPQRTESDLRIAGGDRTQPPLPSLPSQDLWTEDGSSEKSDTSDSDADVGDGYIMR. Tyr510 is subject to Phosphotyrosine.

This sequence belongs to the type II cytokine receptor family. Heterodimer with IFNAR1; forming the receptor for type I interferon. Interacts with the transcriptional factors STAT1 and STAT2. Interacts with JAK1. Interacts with USP18; indirectly via STAT2, it negatively regulates the assembly of the ternary interferon-IFNAR1-IFNAR2 complex and therefore type I interferon signaling. Phosphorylated on tyrosine residues upon interferon binding. Phosphorylation at Tyr-335 or Tyr-510 are sufficient to mediate interferon dependent activation of STAT1, STAT2 and STAT3 leading to antiproliferative effects on many different cell types. In terms of tissue distribution, widely expressed. Detected in liver, testis, kidney, salivary gland, thymus, brain, lung and placenta. Isoform 1, isoform 2 and isoform 3 are expressed in brain.

It localises to the cell membrane. The protein resides in the secreted. Functionally, together with IFNAR1, forms the heterodimeric receptor for type I interferons (including interferons alpha, beta, epsilon, omega and kappa). Type I interferon binding activates the JAK-STAT signaling cascade, resulting in transcriptional activation or repression of interferon-regulated genes that encode the effectors of the interferon response. Mechanistically, type I interferon-binding brings the IFNAR1 and IFNAR2 subunits into close proximity with one another, driving their associated Janus kinases (JAKs) (TYK2 bound to IFNAR1 and JAK1 bound to IFNAR2) to cross-phosphorylate one another. The activated kinases phosphorylate specific tyrosine residues on the intracellular domains of IFNAR1 and IFNAR2, forming docking sites for the STAT transcription factors (STAT1, STAT2 and STAT). STAT proteins are then phosphorylated by the JAKs, promoting their translocation into the nucleus to regulate expression of interferon-regulated genes. May be potent inhibitors of type I IFN receptor activity. The protein is Interferon alpha/beta receptor 2 (Ifnar2) of Mus musculus (Mouse).